A 115-amino-acid polypeptide reads, in one-letter code: MSDQKPNTPNVPAPPDDGQGAVIAEKQLQRVEPPRVYQVVMLNDDFTPMEFVVMVLQQFFRHDLEAATQIMLKIHHEGRAVCGVYTQDVAATKVEMVQAAARRAGHPLQCTMEVA.

This sequence belongs to the ClpS family. As to quaternary structure, binds to the N-terminal domain of the chaperone ClpA.

Functionally, involved in the modulation of the specificity of the ClpAP-mediated ATP-dependent protein degradation. The chain is ATP-dependent Clp protease adapter protein ClpS from Leptothrix cholodnii (strain ATCC 51168 / LMG 8142 / SP-6) (Leptothrix discophora (strain SP-6)).